The chain runs to 241 residues: MGRAYQNRKESMAKTAAAKTKVYSKYGREIYMAAKAGGIDPQANLSLRGLIERAKKDQVPTHVIEKAIDKAKGGAGEDYAPARYEGYGPGNCMVIVDCLTDNPNRTFGDVRLAFTKTKCKIGTPGAVAHMFDHCAIFAFAGQDEEAVLEALMEADVDVTDIESEDGKITVFTPNTEYAKAKQALEAAFEGIEFDVDEIQFLPKTTTVVEGDDIPMFEKFLDMLNDLDDVQNVFHNAELPQE.

Belongs to the TACO1 family.

Its subcellular location is the cytoplasm. The chain is Probable transcriptional regulatory protein Maqu_2154 from Marinobacter nauticus (strain ATCC 700491 / DSM 11845 / VT8) (Marinobacter aquaeolei).